The chain runs to 314 residues: tRNA N6-adenosine threonylcarbamoyltransferase (314 aa).

Fe cation-binding residues include H106, H110, and Y127. Substrate-binding positions include Y127–A131, D159, G172, E176, and N255. Position 283 (D283) interacts with Fe cation.

This sequence belongs to the KAE1 / TsaD family. Fe(2+) is required as a cofactor.

Its subcellular location is the cytoplasm. It catalyses the reaction L-threonylcarbamoyladenylate + adenosine(37) in tRNA = N(6)-L-threonylcarbamoyladenosine(37) in tRNA + AMP + H(+). In terms of biological role, required for the formation of a threonylcarbamoyl group on adenosine at position 37 (t(6)A37) in tRNAs that read codons beginning with adenine. Is probably involved in the transfer of the threonylcarbamoyl moiety of threonylcarbamoyl-AMP (TC-AMP) to the N6 group of A37. This Nanoarchaeum equitans (strain Kin4-M) protein is tRNA N6-adenosine threonylcarbamoyltransferase.